A 199-amino-acid chain; its full sequence is N-(5'-phosphoribosyl)anthranilate isomerase (199 aa).

Belongs to the TrpF family.

It catalyses the reaction N-(5-phospho-beta-D-ribosyl)anthranilate = 1-(2-carboxyphenylamino)-1-deoxy-D-ribulose 5-phosphate. The protein operates within amino-acid biosynthesis; L-tryptophan biosynthesis; L-tryptophan from chorismate: step 3/5. The polypeptide is N-(5'-phosphoribosyl)anthranilate isomerase (Streptococcus pneumoniae (strain ATCC 700669 / Spain 23F-1)).